The following is a 602-amino-acid chain: Proteasome-associated ATPase (602 aa).

A coiled-coil region spans residues 13-89 (PDAAEVERLR…LREEVDRLGQ (77 aa)). 289 to 294 (GCGKTL) lines the ATP pocket. Residues 601–602 (YL) form a docks into pockets in the proteasome alpha-ring region.

It belongs to the AAA ATPase family. In terms of assembly, homohexamer. Assembles into a hexameric ring structure that caps the 20S proteasome core. Strongly interacts with the prokaryotic ubiquitin-like protein Pup through a hydrophobic interface; the interacting region of ARC lies in its N-terminal coiled-coil domain. There is one Pup binding site per ARC hexamer ring. Upon ATP-binding, the C-terminus of ARC interacts with the alpha-rings of the proteasome core, possibly by binding to the intersubunit pockets.

The protein operates within protein degradation; proteasomal Pup-dependent pathway. In terms of biological role, ATPase which is responsible for recognizing, binding, unfolding and translocation of pupylated proteins into the bacterial 20S proteasome core particle. May be essential for opening the gate of the 20S proteasome via an interaction with its C-terminus, thereby allowing substrate entry and access to the site of proteolysis. Thus, the C-termini of the proteasomal ATPase may function like a 'key in a lock' to induce gate opening and therefore regulate proteolysis. This is Proteasome-associated ATPase from Mycobacteroides abscessus (strain ATCC 19977 / DSM 44196 / CCUG 20993 / CIP 104536 / JCM 13569 / NCTC 13031 / TMC 1543 / L948) (Mycobacterium abscessus).